The sequence spans 542 residues: Mitochondrial distribution and morphology protein 34 (542 aa).

The SMP-LTD domain occupies 1 to 216; that stretch reads MSFRFNKGAF…LPSVIFSMSQ (216 aa). Disordered stretches follow at residues 27–58 and 372–435; these read LNSK…TRGP and SSGD…TTAV. The span at 31–48 shows a compositional bias: low complexity; that stretch reads TQSSSQTAPANTTNSAAT. A compositionally biased stretch (basic and acidic residues) spans 49–58; sequence DEVKQETRGP. Over residues 379-394 the composition is skewed to basic residues; sequence IRRRKIKMGKKSKSKK. A compositionally biased stretch (low complexity) spans 403-414; it reads SSPTVVMPSSPS.

Belongs to the MDM34 family. As to quaternary structure, component of the ER-mitochondria encounter structure (ERMES) or MDM complex, composed of MMM1, MDM10, MDM12 and MDM34.

The protein localises to the mitochondrion outer membrane. Component of the ERMES/MDM complex, which serves as a molecular tether to connect the endoplasmic reticulum (ER) and mitochondria. Components of this complex are involved in the control of mitochondrial shape and protein biogenesis, and function in nonvesicular lipid trafficking between the ER and mitochondria. MDM34 is required for the interaction of the ER-resident membrane protein MMM1 and the outer mitochondrial membrane-resident beta-barrel protein MDM10. This is Mitochondrial distribution and morphology protein 34 from Lachancea thermotolerans (strain ATCC 56472 / CBS 6340 / NRRL Y-8284) (Yeast).